The sequence spans 930 residues: Serine/threonine-protein kinase ATG1 (930 aa).

Positions 23 to 326 constitute a Protein kinase domain; the sequence is FIIDREIGKG…FENFFAHHVV (304 aa). ATP-binding positions include 29–37 and lysine 52; that span reads IGKGSFAQV. The Proton acceptor role is filled by aspartate 166. Disordered regions lie at residues 336–468, 504–563, 853–874, and 904–930; these read DDIP…TEEE, GQNN…SASP, ISSG…DTEE, and NQAK…YGST. Over residues 337 to 350 the composition is skewed to basic and acidic residues; that stretch reads DIPKPPKRELETIR. The span at 377–393 shows a compositional bias: low complexity; the sequence is SPKSPRSSPRSSTVNSS. 2 stretches are compositionally biased toward polar residues: residues 400 to 417 and 504 to 531; these read RQSQ…HNSG and GQNN…TTGA. The segment at 629–897 is ATG13-binding; sequence AAQAIEEFAT…RLNMVRKKQQ (269 aa).

Belongs to the protein kinase superfamily. Ser/Thr protein kinase family. APG1/unc-51/ULK1 subfamily. In terms of assembly, homodimer. Dimerization requires the presence of ATG13. Forms a ternary complex with ATG13 and ATG17.

It is found in the cytoplasm. The protein resides in the preautophagosomal structure membrane. It catalyses the reaction L-seryl-[protein] + ATP = O-phospho-L-seryl-[protein] + ADP + H(+). The catalysed reaction is L-threonyl-[protein] + ATP = O-phospho-L-threonyl-[protein] + ADP + H(+). Serine/threonine protein kinase involved in the cytoplasm to vacuole transport (Cvt) and found to be essential in autophagy, where it is required for the formation of autophagosomes. Involved in the clearance of protein aggregates which cannot be efficiently cleared by the proteasome. Required for selective autophagic degradation of the nucleus (nucleophagy) as well as for mitophagy which contributes to regulate mitochondrial quantity and quality by eliminating the mitochondria to a basal level to fulfill cellular energy requirements and preventing excess ROS production. Also involved in endoplasmic reticulum-specific autophagic process, in selective removal of ER-associated degradation (ERAD) substrates. Plays a key role in ATG9 and ATG23 cycling through the pre-autophagosomal structure and is necessary to promote ATG18 binding to ATG9 through phosphorylation of ATG9. Catalyzes phosphorylation of ATG4, decreasing the interaction between ATG4 and ATG8 and impairing deconjugation of PE-conjugated forms of ATG8. Contributes to conidiation by regulating the conidial levels of the conidiation-related protein CP15 and mediates fungal oxidation resistance by controlling total superoxide dismutase (SOD) activity. This chain is Serine/threonine-protein kinase ATG1, found in Beauveria bassiana (strain ARSEF 2860) (White muscardine disease fungus).